The chain runs to 288 residues: S-methyl-5'-thioadenosine phosphorylase (288 aa).

Phosphate is bound by residues Ser-10, 52 to 53 (RH), and 85 to 86 (TA). Met-188 serves as a coordination point for substrate. A phosphate-binding site is contributed by Thr-189. 212–214 (DYD) contacts substrate.

The protein belongs to the PNP/MTAP phosphorylase family. MTAP subfamily. As to quaternary structure, homotrimer.

It localises to the cytoplasm. The protein localises to the nucleus. The catalysed reaction is S-methyl-5'-thioadenosine + phosphate = 5-(methylsulfanyl)-alpha-D-ribose 1-phosphate + adenine. It functions in the pathway amino-acid biosynthesis; L-methionine biosynthesis via salvage pathway; S-methyl-5-thio-alpha-D-ribose 1-phosphate from S-methyl-5'-thioadenosine (phosphorylase route): step 1/1. Its function is as follows. Catalyzes the reversible phosphorylation of S-methyl-5'-thioadenosine (MTA) to adenine and 5-methylthioribose-1-phosphate. Involved in the breakdown of MTA, a major by-product of polyamine biosynthesis. Responsible for the first step in the methionine salvage pathway after MTA has been generated from S-adenosylmethionine. Has broad substrate specificity with 6-aminopurine nucleosides as preferred substrates. The polypeptide is S-methyl-5'-thioadenosine phosphorylase (Caenorhabditis elegans).